Consider the following 568-residue polypeptide: Lariat debranching enzyme (568 aa).

The a divalent metal cation site is built by Cys-8, His-10, Asp-39, and Asn-84. The interval 124-154 (SGIFKSHDFKKGHFEFPPYNPETLRSVYHIR) is lariat recognition loop. Residues His-174, His-226, and His-228 each contribute to the a divalent metal cation site. Residues 388–568 (IYGERGGKGA…TAVEDEESDS (181 aa)) form a disordered region. Positions 417–428 (PSDTSGLSSSYN) are enriched in polar residues. Residues 432–444 (ITIEDEWEEEEDG) show a composition bias toward acidic residues. Residues 467 to 480 (DSDRDSSPQRETAK) show a composition bias toward basic and acidic residues. Residue Thr-478 is modified to Phosphothreonine. Positions 534-549 (GETTQSSAGQTGGTPQ) are enriched in low complexity. Ser-568 carries the phosphoserine modification.

The protein belongs to the lariat debranching enzyme family. Requires Fe(2+) as cofactor. The cofactor is Zn(2+). Mn(2+) serves as cofactor.

The protein localises to the nucleus. Its activity is regulated as follows. Active in presence of diverse metals including Fe(2+), Zn(2+), Mn(2+). Also activated by Ca(2+). Binds two metal cations in two adjacent alpha and beta metal-binding pockets. Functionally, cleaves the 2'-5' phosphodiester linkage at the branch point of excised lariat intron RNA and converts them into linear molecules that can be subsequently degraded, thereby facilitating ribonucleotide turnover. Linked to its role in pre-mRNA processing mechanism, may also participate in retrovirus replication and have an antiviral cell-intrinsic defense function. The polypeptide is Lariat debranching enzyme (dbr1) (Danio rerio (Zebrafish)).